A 383-amino-acid polypeptide reads, in one-letter code: Retrovirus-related Pol polyprotein from type-1 retrotransposable element R1 3 (383 aa).

The Reverse transcriptase domain occupies 1–88 (VDAFADDLLL…DRVRYLGVNV (88 aa)). Residues 229–383 (LSLHECRELV…VQRMRENEES (155 aa)) are nucleic acid-binding endonuclease.

The enzyme catalyses DNA(n) + a 2'-deoxyribonucleoside 5'-triphosphate = DNA(n+1) + diphosphate. The chain is Retrovirus-related Pol polyprotein from type-1 retrotransposable element R1 3 from Nasonia vitripennis (Parasitic wasp).